The primary structure comprises 607 residues: DNA mismatch repair protein MutL (607 aa).

It belongs to the DNA mismatch repair MutL/HexB family.

Its function is as follows. This protein is involved in the repair of mismatches in DNA. It is required for dam-dependent methyl-directed DNA mismatch repair. May act as a 'molecular matchmaker', a protein that promotes the formation of a stable complex between two or more DNA-binding proteins in an ATP-dependent manner without itself being part of a final effector complex. This is DNA mismatch repair protein MutL from Paramagnetospirillum magneticum (strain ATCC 700264 / AMB-1) (Magnetospirillum magneticum).